The following is a 463-amino-acid chain: Dipeptidyl peptidase 1 (463 aa).

An N-terminal signal peptide occupies residues 1-24 (MGPWSGSRLVALLLLVYGAGSVRG). Residues N29 and N53 are each glycosylated (N-linked (GlcNAc...) asparagine). Cystine bridges form between C30-C118 and C54-C136. Residues 135-230 (ACFTGRKTGN…TAEIQKKILH (96 aa)) constitute a propeptide that is removed on maturation. N144 carries an N-linked (GlcNAc...) asparagine glycan. 3 cysteine pairs are disulfide-bonded: C255–C298, C291–C331, and C321–C337. C258 is a catalytic residue. The N-linked (GlcNAc...) asparagine glycan is linked to N276. F302 and Y304 together coordinate chloride. Residue Y347 coordinates chloride. Catalysis depends on residues H405 and N427.

This sequence belongs to the peptidase C1 family. As to quaternary structure, tetramer of heterotrimers consisting of exclusion domain, heavy- and light chains. The cofactor is chloride.

It is found in the lysosome. It catalyses the reaction Release of an N-terminal dipeptide, Xaa-Yaa-|-Zaa-, except when Xaa is Arg or Lys, or Yaa or Zaa is Pro.. Thiol protease. Has dipeptidylpeptidase activity. Active against a broad range of dipeptide substrates composed of both polar and hydrophobic amino acids. Proline cannot occupy the P1 position and arginine cannot occupy the P2 position of the substrate. Can act as both an exopeptidase and endopeptidase. Activates serine proteases such as elastase, cathepsin G and granzymes A and B. The protein is Dipeptidyl peptidase 1 (CTSC) of Bos taurus (Bovine).